Reading from the N-terminus, the 336-residue chain is Probable allantoicase (336 aa).

Belongs to the allantoicase family.

The enzyme catalyses allantoate + H2O = (S)-ureidoglycolate + urea. It functions in the pathway nitrogen metabolism; (S)-allantoin degradation; (S)-ureidoglycolate from allantoate (aminidohydrolase route): step 1/1. This chain is Probable allantoicase, found in Acinetobacter baumannii (strain ATCC 17978 / DSM 105126 / CIP 53.77 / LMG 1025 / NCDC KC755 / 5377).